The following is a 303-amino-acid chain: Glucose-1-phosphate thymidylyltransferase (303 aa).

Positions 108 and 222 each coordinate Mg(2+).

This sequence belongs to the glucose-1-phosphate thymidylyltransferase family. The cofactor is Mg(2+).

The catalysed reaction is dTTP + alpha-D-glucose 1-phosphate + H(+) = dTDP-alpha-D-glucose + diphosphate. Catalyzes the formation of dTDP-glucose, from dTTP and glucose 1-phosphate, as well as its pyrophosphorolysis. Functionally, probably involved in the biosynthesis of the acarviose moiety of the alpha-glucosidase inhibitor acarbose. The protein is Glucose-1-phosphate thymidylyltransferase (acbA) of Actinoplanes sp. (strain ATCC 31044 / CBS 674.73 / SE50/110).